The sequence spans 432 residues: Glutamate-1-semialdehyde 2,1-aminomutase (432 aa).

The residue at position 272 (K272) is an N6-(pyridoxal phosphate)lysine.

The protein belongs to the class-III pyridoxal-phosphate-dependent aminotransferase family. HemL subfamily. As to quaternary structure, homodimer. Pyridoxal 5'-phosphate is required as a cofactor.

It is found in the cytoplasm. The enzyme catalyses (S)-4-amino-5-oxopentanoate = 5-aminolevulinate. It participates in porphyrin-containing compound metabolism; protoporphyrin-IX biosynthesis; 5-aminolevulinate from L-glutamyl-tRNA(Glu): step 2/2. The protein operates within porphyrin-containing compound metabolism; chlorophyll biosynthesis. The protein is Glutamate-1-semialdehyde 2,1-aminomutase of Cyanothece sp. (strain PCC 7425 / ATCC 29141).